A 551-amino-acid chain; its full sequence is Chaperonin GroEL (551 aa).

ATP-binding positions include 30-33, Lys51, 87-91, Gly415, 479-481, and Asp495; these read TLGP, DGTTT, and NAA.

The protein belongs to the chaperonin (HSP60) family. As to quaternary structure, forms a cylinder of 14 subunits composed of two heptameric rings stacked back-to-back. Interacts with the co-chaperonin GroES.

The protein localises to the cytoplasm. It carries out the reaction ATP + H2O + a folded polypeptide = ADP + phosphate + an unfolded polypeptide.. Functionally, together with its co-chaperonin GroES, plays an essential role in assisting protein folding. The GroEL-GroES system forms a nano-cage that allows encapsulation of the non-native substrate proteins and provides a physical environment optimized to promote and accelerate protein folding. This chain is Chaperonin GroEL, found in Acidithiobacillus ferrooxidans (strain ATCC 23270 / DSM 14882 / CIP 104768 / NCIMB 8455) (Ferrobacillus ferrooxidans (strain ATCC 23270)).